We begin with the raw amino-acid sequence, 68 residues long: Cx9C motif-containing protein 4 (68 aa).

Positions 4-46 constitute a CHCH domain; the sequence is KDPCQKQACEIQKCLQANNYLESKCQAVIQELRKCCARYPKGR. 2 short sequence motifs (cx9C motif) span residues 7-17 and 28-38; these read CQKQACEIQKC and CQAVIQELRKC. 3 disulfides stabilise this stretch: Cys7–Cys38, Cys17–Cys28, and Cys39–Cys50.

It belongs to the CMC4 family. As to expression, expressed in many tissues.

Its subcellular location is the mitochondrion. The chain is Cx9C motif-containing protein 4 (Cmc4) from Mus musculus (Mouse).